Here is a 215-residue protein sequence, read N- to C-terminus: HTH-type transcriptional repressor FabR (215 aa).

Positions 10–70 constitute an HTH tetR-type domain; sequence KTRRSLVEAA…TMVDESGLML (61 aa). A DNA-binding region (H-T-H motif) is located at residues 33 to 52; that stretch reads SLREVAREAGIAPTSFYRHF.

In terms of assembly, homodimer.

It is found in the cytoplasm. In terms of biological role, represses the transcription of fabB, involved in unsaturated fatty acid (UFA) biosynthesis. By controlling UFA production, FabR directly influences the physical properties of the membrane bilayer. The sequence is that of HTH-type transcriptional repressor FabR from Escherichia coli O139:H28 (strain E24377A / ETEC).